The primary structure comprises 238 residues: Small ribosomal subunit protein uS2 (238 aa).

Belongs to the universal ribosomal protein uS2 family.

The sequence is that of Small ribosomal subunit protein uS2 from Haemophilus ducreyi (strain 35000HP / ATCC 700724).